A 300-amino-acid polypeptide reads, in one-letter code: Protoheme IX farnesyltransferase (300 aa).

Helical transmembrane passes span 24–44 (VTQL…PGMV), 46–66 (WHVL…AFAI), 94–114 (PQIL…LYTF), 118–138 (LTMW…TLLL), 146–166 (IVIG…AVTG), 172–192 (AWIL…VLAL), 224–244 (VILF…VVYL), and 278–298 (IVYL…RPLL).

It belongs to the UbiA prenyltransferase family. Protoheme IX farnesyltransferase subfamily.

The protein resides in the cell inner membrane. It carries out the reaction heme b + (2E,6E)-farnesyl diphosphate + H2O = Fe(II)-heme o + diphosphate. It participates in porphyrin-containing compound metabolism; heme O biosynthesis; heme O from protoheme: step 1/1. In terms of biological role, converts heme B (protoheme IX) to heme O by substitution of the vinyl group on carbon 2 of heme B porphyrin ring with a hydroxyethyl farnesyl side group. The polypeptide is Protoheme IX farnesyltransferase (Burkholderia ambifaria (strain ATCC BAA-244 / DSM 16087 / CCUG 44356 / LMG 19182 / AMMD) (Burkholderia cepacia (strain AMMD))).